A 2669-amino-acid polypeptide reads, in one-letter code: Nucleosome-remodeling factor subunit NURF301 (2669 aa).

A compositionally biased stretch (basic residues) spans 1–12; sequence MSGRGSRKRGRP. Residues 1-121 are required for function in nucleosome sliding; the sequence is MSGRGSRKRG…EEDKSDNEDD (121 aa). The tract at residues 1–125 is disordered; the sequence is MSGRGSRKRG…SDNEDDMLLT (125 aa). The a.T hook DNA-binding region spans 6 to 18; the sequence is SRKRGRPPKTPNE. Polar residues predominate over residues 38 to 56; that stretch reads GKSQPSTPSASRGISPQSD. S40, S52, S55, S59, and S62 each carry phosphoserine. The span at 66–82 shows a compositional bias: basic residues; the sequence is HTNRSRGSAAKRGRGRK. Residues 109 to 125 show a composition bias toward acidic residues; sequence GDSEEDKSDNEDDMLLT. One can recognise a DDT domain in the interval 188–248; it reads NTHVLRALSI…LKAILREEDA (61 aa). A PHD-type 1 zinc finger spans residues 339–386; the sequence is DDHCRVCHRLGDLLCCETCPAVYHLECVDPPMNDVPTEDWQCGLCRSH. Residues 460–515 are a coiled coil; the sequence is RLHSQITERRDEIERQMKLTETLTNEHKHTKRSVIEIEQEAKNELLEKEVLDEDEK. The segment at 505-538 is disordered; the sequence is LEKEVLDEDEKDGDAKSESQSIEGTKKQEECKMV. The segment covering 528-537 has biased composition (basic and acidic residues); sequence GTKKQEECKM. A coiled-coil region spans residues 688-720; that stretch reads LQRITSAEREERKKLEKREKRERDDEEERNRLA. Disordered regions lie at residues 1026–1048, 1135–1159, and 1406–1425; these read EGKR…AESE, TGLN…NQKS, and RSGL…EPQI. Residue S1417 is modified to Phosphoserine. T1527 bears the Phosphothreonine mark. Over residues 1559 to 1590 the composition is skewed to low complexity; sequence SRTGGANTAAAAASPTVGGSTSTQSNPSTSTP. Disordered stretches follow at residues 1559–1596, 2181–2203, and 2283–2307; these read SRTG…VQII, INNG…ITTN, and TNEW…QTDD. The span at 2283 to 2293 shows a compositional bias: polar residues; the sequence is TNEWETCSRGS. The stretch at 2338–2373 forms a coiled coil; that stretch reads KNDEVAELGEQKQSQLERHKELLKKNILRKRSLLER. Residues 2382–2432 are disordered; it reads DVKTKVQRHVRPLSNASPDEQSENERSGEPNLDFKRTEVQNPRHGAGRPKK. Phosphoserine is present on residues S2395, S2398, and S2403. Basic and acidic residues predominate over residues 2404 to 2419; sequence ENERSGEPNLDFKRTE. The PHD-type 2 zinc finger occupies 2481-2546; that stretch reads EFICIDCKRA…EYVCPECQRK (66 aa). The Bromo domain occupies 2556-2660; it reads KLTSNDVEEL…SYFVQKIKNF (105 aa).

This sequence belongs to the BPTF family. Component of the NURF complex composed of Caf1-55, E(bx), Nurf-38 and Iswi. Interacts with Trl. Interacts with histone H3-K4Me3.

The protein resides in the nucleus. Its function is as follows. Histone-binding component of NURF (nucleosome remodeling factor), a complex which catalyzes ATP-dependent nucleosome sliding and facilitates transcription of chromatin. Specifically recognizes H3 tails trimethylated on 'Lys-4' (H3K4me3), which mark transcription start sites of virtually all active genes. Required for homeotic gene expression, proper larval blood cell development, normal male X chromosome morphology, ecdysteroid signaling and metamorphosis. This is Nucleosome-remodeling factor subunit NURF301 (E(bx)) from Drosophila melanogaster (Fruit fly).